The sequence spans 709 residues: Phosphomethylpyrimidine synthase (709 aa).

The span at 1–13 shows a compositional bias: polar residues; it reads MNIRSNPDTTLPA. 2 disordered regions span residues 1–21 and 125–168; these read MNIR…PLPS and DAPA…GREQ. Residues asparagine 274, methionine 303, tyrosine 332, histidine 368, 388 to 390, 429 to 432, and glutamate 468 each bind substrate; these read SRG and DGLR. Histidine 472 serves as a coordination point for Zn(2+). Tyrosine 495 is a substrate binding site. Histidine 536 provides a ligand contact to Zn(2+). The [4Fe-4S] cluster site is built by cysteine 616, cysteine 619, and cysteine 624.

Belongs to the ThiC family. In terms of assembly, homodimer. Requires [4Fe-4S] cluster as cofactor.

The enzyme catalyses 5-amino-1-(5-phospho-beta-D-ribosyl)imidazole + S-adenosyl-L-methionine = 4-amino-2-methyl-5-(phosphooxymethyl)pyrimidine + CO + 5'-deoxyadenosine + formate + L-methionine + 3 H(+). It functions in the pathway cofactor biosynthesis; thiamine diphosphate biosynthesis. Functionally, catalyzes the synthesis of the hydroxymethylpyrimidine phosphate (HMP-P) moiety of thiamine from aminoimidazole ribotide (AIR) in a radical S-adenosyl-L-methionine (SAM)-dependent reaction. In Rhodopseudomonas palustris (strain BisB18), this protein is Phosphomethylpyrimidine synthase.